We begin with the raw amino-acid sequence, 193 residues long: Acyl-homoserine-lactone synthase (193 aa).

The protein belongs to the autoinducer synthase family.

It carries out the reaction a fatty acyl-[ACP] + S-adenosyl-L-methionine = an N-acyl-L-homoserine lactone + S-methyl-5'-thioadenosine + holo-[ACP] + H(+). Its function is as follows. Required for the synthesis of OHHL (N-(3-oxohexanoyl)-L-homoserine lactone) also known as VAI or N-(beta-ketocaproyl)homoserine lactone or 3-oxo-N-(tetrahydro-2-oxo-3-furanyl)-hexanamide, an autoinducer molecule which binds to LuxR and thus acts in bioluminescence regulation. This Aliivibrio fischeri (strain ATCC 700601 / ES114) (Vibrio fischeri) protein is Acyl-homoserine-lactone synthase (luxI).